We begin with the raw amino-acid sequence, 725 residues long: Ribonuclease Y (725 aa).

A helical transmembrane segment spans residues 4 to 24 (VLVILLSLVLLVLVALILAVA). Disordered regions lie at residues 62-140 (DGPA…ASDT), 165-195 (VAAT…SVRR), and 300-321 (EQRV…AGRE). Composition is skewed to low complexity over residues 84-100 (DAPG…PDAG) and 114-137 (AAAP…PADA). Residues 415–481 (VVTVLHLPGD…RITLAALVSD (67 aa)) enclose the KH domain. In terms of domain architecture, HD spans 541–634 (VLAHLIESAH…TQAADQISGG (94 aa)).

The protein belongs to the RNase Y family.

It is found in the cell membrane. Its function is as follows. Endoribonuclease that initiates mRNA decay. The sequence is that of Ribonuclease Y from Frankia alni (strain DSM 45986 / CECT 9034 / ACN14a).